The primary structure comprises 130 residues: Small ribosomal subunit protein uS9 (130 aa).

The protein belongs to the universal ribosomal protein uS9 family.

The chain is Small ribosomal subunit protein uS9 from Geobacillus sp. (strain WCH70).